Reading from the N-terminus, the 196-residue chain is MFCEKAMELVRELHRAPEGQLPAFNEDGLRQVLEEMKALYEQNQSDVNEAKSAGRGDLIPTVKFRHCALLRNRRCTIAYLYDRLLRIRALRWEYGSVLPNSLRFHMSAEETEWFNHYKKSLATYMRSLGGDEGLDITQDVKPPKSLYIEVRCLKDYGEFEVDDGTSVLLKKNSQHFLPRWKCEQLIRQGVLEHVLS.

It belongs to the GINS1/PSF1 family. As to quaternary structure, component of the GINS complex which is a heterotetramer of GINS1, GINS2, GINS3 and GINS4. Forms a stable subcomplex with GINS4. GINS complex interacts with DNA primase in vitro. Component of the CMG helicase complex, a hexameric ring of related MCM2-7 subunits stabilized by CDC45 and the tetrameric GINS complex.

Its subcellular location is the nucleus. The protein localises to the chromosome. Functionally, required for correct functioning of the GINS complex, a complex that plays an essential role in the initiation of DNA replication, and progression of DNA replication forks. GINS complex is a core component of CDC45-MCM-GINS (CMG) helicase, the molecular machine that unwinds template DNA during replication, and around which the replisome is built. The sequence is that of DNA replication complex GINS protein PSF1 (Gins1) from Mus musculus (Mouse).